Consider the following 157-residue polypeptide: Small ribosomal subunit protein uS7 (157 aa).

Belongs to the universal ribosomal protein uS7 family. In terms of assembly, part of the 30S ribosomal subunit. Contacts proteins S9 and S11.

One of the primary rRNA binding proteins, it binds directly to 16S rRNA where it nucleates assembly of the head domain of the 30S subunit. Is located at the subunit interface close to the decoding center, probably blocks exit of the E-site tRNA. This is Small ribosomal subunit protein uS7 from Borrelia turicatae (strain 91E135).